The sequence spans 202 residues: Ribosome maturation factor RimM (202 aa).

The PRC barrel domain maps to 121-202 (KDEYYWVDLI…CITVDWQPDY (82 aa)).

This sequence belongs to the RimM family. Binds ribosomal protein uS19.

It is found in the cytoplasm. Functionally, an accessory protein needed during the final step in the assembly of 30S ribosomal subunit, possibly for assembly of the head region. Essential for efficient processing of 16S rRNA. May be needed both before and after RbfA during the maturation of 16S rRNA. It has affinity for free ribosomal 30S subunits but not for 70S ribosomes. The sequence is that of Ribosome maturation factor RimM from Polaromonas sp. (strain JS666 / ATCC BAA-500).